The primary structure comprises 2477 residues: Non-reducing polyketide synthase mapC (2477 aa).

Residues 14–269 (LLFGPQCSEI…HQQTHREGIQ (256 aa)) are N-terminal acylcarrier protein transacylase domain (SAT). One can recognise a Ketosynthase family 3 (KS3) domain in the interval 403-820 (MPPIAITGMA…GSNAALIVRD (418 aa)). Residues Cys-568, His-703, and His-742 each act as for beta-ketoacyl synthase activity in the active site. Residues 930-1233 (LCFGGQNGVT…HRVNLDGSDG (304 aa)) are malonyl-CoA:ACP transacylase (MAT) domain. Ser-1017 serves as the catalytic For acyl/malonyl transferase activity. The interval 1302–1435 (QERAGLLRKL…GSVSLCNERS (134 aa)) is N-terminal hotdog fold. One can recognise a PKS/mFAS DH domain in the interval 1302-1612 (QERAGLLRKL…FMSVSIRSLT (311 aa)). The product template (PT) domain stretch occupies residues 1307–1611 (LLRKLSDGPE…RFMSVSIRSL (305 aa)). The Proton acceptor; for dehydratase activity role is filled by His-1336. The tract at residues 1461 to 1612 (ASNGLKGSTV…FMSVSIRSLT (152 aa)) is C-terminal hotdog fold. The Proton donor; for dehydratase activity role is filled by Asp-1518. Positions 1651–1725 (DSDLVAVQEM…GLTEHIFPGH (75 aa)) constitute a Carrier domain. An O-(pantetheine 4'-phosphoryl)serine modification is found at Ser-1685. The segment at 1882-2117 (PYALEHDLLQ…GFEWVGWTNN (236 aa)) is methyltransferase (CMeT) domain. Residues Ser-2267 and Asp-2421 each act as for thioesterase activity in the active site.

Its subcellular location is the cytoplasm. It is found in the cytosol. The enzyme catalyses 3 malonyl-CoA + acetyl-CoA + S-adenosyl-L-methionine + H(+) = 5-methylorsellinate + S-adenosyl-L-homocysteine + 3 CO2 + 4 CoA. Its pathway is secondary metabolite biosynthesis; terpenoid biosynthesis. Functionally, non-reducing polyketide synthase; part of the gene cluster that mediates the biosynthesis of mycophenolic acid (MPA), the first isolated antibiotic natural product in the world obtained from a culture of Penicillium brevicompactum in 1893. MpaC catalyzes the synthesis of 5-methylorsellinic acid (5MOA) via the condensation of 1 acetyl-CoA starter unit with 3 malonyl-CoA units and one methylation step. The first step of the pathway is the synthesis of 5-methylorsellinic acid (5MOA) by the cytosolic polyketide synthase mpaC. 5MOA is then converted to the phthalide compound 5,7-dihydroxy-4,6-dimethylphthalide (DHMP) by the endoplasmic reticulum-bound cytochrome P450 monooxygenase mpaDE. MpaDE first catalyzes hydroxylation of 5-MOA to 4,6-dihydroxy-2-(hydroxymethyl)-3-methylbenzoic acid (DHMB). MpaDE then acts as a lactone synthase that catalyzes the ring closure to convert DHMB into DHMP. The next step is the prenylation of DHMP by the Golgi apparatus-associated prenyltransferase mpaA to yield farnesyl-DHMP (FDHMP). The ER-bound oxygenase mpaB then mediates the oxidative cleavage the C19-C20 double bond in FDHMP to yield FDHMP-3C via a mycophenolic aldehyde intermediate. The O-methyltransferase mpaG catalyzes the methylation of FDHMP-3C to yield MFDHMP-3C. After the cytosolic methylation of FDHMP-3C, MFDHMP-3C enters into peroxisomes probably via free diffusion due to its low molecular weight. Upon a peroxisomal CoA ligation reaction, catalyzed by a beta-oxidation component enzyme acyl-CoA ligase ACL891, MFDHMP-3C-CoA would then be restricted to peroxisomes for the following beta-oxidation pathway steps. The peroxisomal beta-oxidation machinery than converts MFDHMP-3C-CoA into MPA_CoA, via a beta-oxidation chain-shortening process. Finally mpaH acts as a peroxisomal acyl-CoA hydrolase with high substrate specificity toward MPA-CoA to release the final product MPA. This chain is Non-reducing polyketide synthase mapC, found in Penicillium roqueforti (strain FM164).